The following is a 205-amino-acid chain: Adenylyl-sulfate kinase (205 aa).

35–42 (GLSGAGKS) lines the ATP pocket. Ser109 acts as the Phosphoserine intermediate in catalysis.

Belongs to the APS kinase family.

The enzyme catalyses adenosine 5'-phosphosulfate + ATP = 3'-phosphoadenylyl sulfate + ADP + H(+). The protein operates within sulfur metabolism; hydrogen sulfide biosynthesis; sulfite from sulfate: step 2/3. Its function is as follows. Catalyzes the synthesis of activated sulfate. The chain is Adenylyl-sulfate kinase from Acaryochloris marina (strain MBIC 11017).